A 1113-amino-acid polypeptide reads, in one-letter code: Carbamoyl phosphate synthase large chain (1113 aa).

The carboxyphosphate synthetic domain stretch occupies residues 1–407; the sequence is MPKRSDINHV…ALNKALRSLE (407 aa). The ATP site is built by R134, R174, G180, G181, E213, I215, E220, G246, V247, H248, Q290, and E304. An ATP-grasp 1 domain is found at 138–333; sequence KDIVTTIGGE…IAKMAAKLAI (196 aa). Residues Q290, E304, and N306 each contribute to the Mg(2+) site. Mn(2+) is bound by residues Q290, E304, and N306. Positions 408–565 are oligomerization domain; it reads TKQQGFWTKP…ELDPAAESEV (158 aa). The tract at residues 566–967 is carbamoyl phosphate synthetic domain; sequence APQTEREKVL…AYAKAEAGAF (402 aa). Residues 695-886 enclose the ATP-grasp 2 domain; that stretch reads GALLNREQLP…LAKAASRIAV (192 aa). Positions 731, 770, 772, 777, 802, 803, 804, 805, 845, and 857 each coordinate ATP. Positions 845, 857, and 859 each coordinate Mg(2+). Mn(2+) contacts are provided by Q845, E857, and N859. The 146-residue stretch at 968–1113 folds into the MGS-like domain; the sequence is GALPTEGTVF…LQELDHAVKA (146 aa). Residues 968 to 1113 form an allosteric domain region; sequence GALPTEGTVF…LQELDHAVKA (146 aa).

The protein belongs to the CarB family. In terms of assembly, composed of two chains; the small (or glutamine) chain promotes the hydrolysis of glutamine to ammonia, which is used by the large (or ammonia) chain to synthesize carbamoyl phosphate. Tetramer of heterodimers (alpha,beta)4. It depends on Mg(2+) as a cofactor. Mn(2+) serves as cofactor.

The enzyme catalyses hydrogencarbonate + L-glutamine + 2 ATP + H2O = carbamoyl phosphate + L-glutamate + 2 ADP + phosphate + 2 H(+). The catalysed reaction is hydrogencarbonate + NH4(+) + 2 ATP = carbamoyl phosphate + 2 ADP + phosphate + 2 H(+). It functions in the pathway amino-acid biosynthesis; L-arginine biosynthesis; carbamoyl phosphate from bicarbonate: step 1/1. It participates in pyrimidine metabolism; UMP biosynthesis via de novo pathway; (S)-dihydroorotate from bicarbonate: step 1/3. Large subunit of the glutamine-dependent carbamoyl phosphate synthetase (CPSase). CPSase catalyzes the formation of carbamoyl phosphate from the ammonia moiety of glutamine, carbonate, and phosphate donated by ATP, constituting the first step of 2 biosynthetic pathways, one leading to arginine and/or urea and the other to pyrimidine nucleotides. The large subunit (synthetase) binds the substrates ammonia (free or transferred from glutamine from the small subunit), hydrogencarbonate and ATP and carries out an ATP-coupled ligase reaction, activating hydrogencarbonate by forming carboxy phosphate which reacts with ammonia to form carbamoyl phosphate. This chain is Carbamoyl phosphate synthase large chain, found in Corynebacterium glutamicum (strain ATCC 13032 / DSM 20300 / JCM 1318 / BCRC 11384 / CCUG 27702 / LMG 3730 / NBRC 12168 / NCIMB 10025 / NRRL B-2784 / 534).